We begin with the raw amino-acid sequence, 285 residues long: 2,4-didehydro-3-deoxy-L-rhamnonate hydrolase (285 aa).

Leu-73 is a binding site for pyruvate. Residues Glu-119, Glu-121, and Asp-150 each contribute to the Mg(2+) site. The pyruvate site is built by Lys-168 and Thr-238.

The protein belongs to the FAH family. Homodimer. It depends on Mg(2+) as a cofactor.

It carries out the reaction 2,4-didehydro-3-deoxy-L-rhamnonate + H2O = (S)-lactate + pyruvate + H(+). The protein operates within carbohydrate degradation; L-rhamnose degradation. In terms of biological role, hydrolase that catalyzes the hydrolysis of 2,4-didehydro-3-deoxy-L-rhamnonate to pyruvate and L-lactate. Can also hydrolyze L-2,4-diketo-3-deoxylyxonate and L-2,4-diketo-3-deoxymannonate. In vitro can also use acylpyruvates such as acetylpyruvate and trimethylacetopyruvate. Catalyzes the fifth (last) step in an alternative pathway for rhamnose utilization that does not involve phosphorylated intermediates. The polypeptide is 2,4-didehydro-3-deoxy-L-rhamnonate hydrolase (Sphingomonas sp. (strain SKA58)).